The chain runs to 419 residues: L-rhamnose isomerase (419 aa).

Residues His-262, Asp-294, and Asp-296 each coordinate Mn(2+).

This sequence belongs to the rhamnose isomerase family. In terms of assembly, homotetramer. The cofactor is Mn(2+).

The protein localises to the cytoplasm. It catalyses the reaction L-rhamnopyranose = L-rhamnulose. Its pathway is carbohydrate degradation; L-rhamnose degradation; glycerone phosphate from L-rhamnose: step 1/3. In terms of biological role, catalyzes the interconversion of L-rhamnose and L-rhamnulose. The sequence is that of L-rhamnose isomerase from Shigella flexneri serotype 5b (strain 8401).